The sequence spans 653 residues: 2-oxoglutarate oxidoreductase subunit KorA (653 aa).

Positions 1 to 21 are disordered; the sequence is MDPNGSGAGPESHDAAFHAAP. The segment covering 11–21 has biased composition (basic and acidic residues); it reads ESHDAAFHAAP.

KG oxidoreductase (KOR) is composed of KorA and KorB subunits.

It carries out the reaction 2 oxidized [2Fe-2S]-[ferredoxin] + 2-oxoglutarate + CoA = succinyl-CoA + 2 reduced [2Fe-2S]-[ferredoxin] + CO2 + H(+). The protein operates within carbohydrate metabolism; tricarboxylic acid cycle. Functionally, component of KG oxidoreductase (KOR) that catalyzes the CoA-dependent oxidative decarboxylation of 2-oxoglutarate (alpha-ketoglutarate, KG) to succinyl-CoA. Methyl viologen can act as electron acceptor in vitro; the physiologic electron acceptor is unknown. Is involved in the alternative TCA pathway that functions concurrently with fatty acid beta-oxidation. Since a growing body of evidence indicates that lipids (for example cholesterol and fatty acids) are a predominant growth substrate for M.tuberculosis during infection, flux through KOR likely represents an important step in intermediary metabolism in vivo. KOR-dependent decarboxylation of KG also appears to be an important source of CO(2) in M.tuberculosis metabolism. In Mycobacterium tuberculosis (strain ATCC 25618 / H37Rv), this protein is 2-oxoglutarate oxidoreductase subunit KorA (korA).